The primary structure comprises 195 residues: HTH-type transcriptional regulator BetI (195 aa).

Positions 8-68 (EIRRAQLIDA…ATMRHVLRDL (61 aa)) constitute an HTH tetR-type domain. Positions 31-50 (TLASVAQRASISTGIVSHYF) form a DNA-binding region, H-T-H motif.

It participates in amine and polyamine biosynthesis; betaine biosynthesis via choline pathway [regulation]. Functionally, repressor involved in the biosynthesis of the osmoprotectant glycine betaine. It represses transcription of the choline transporter BetT and the genes of BetAB involved in the synthesis of glycine betaine. The polypeptide is HTH-type transcriptional regulator BetI (Paraburkholderia xenovorans (strain LB400)).